A 400-amino-acid chain; its full sequence is SEC14-like protein 3 (400 aa).

The region spanning 76–249 is the CRAL-TRIO domain; that stretch reads PPEVIQKYMP…QFGGTLTDPD (174 aa). The region spanning 275 to 383 is the GOLD domain; the sequence is KTQYEHSVQI…AKKVSFTVEV (109 aa).

Functionally, probable hydrophobic ligand-binding protein; may play a role in the transport of hydrophobic ligands like tocopherol, squalene and phospholipids. The chain is SEC14-like protein 3 (SEC14L3) from Homo sapiens (Human).